Here is a 445-residue protein sequence, read N- to C-terminus: Ribosomal protein uS12 methylthiotransferase RimO (445 aa).

The MTTase N-terminal domain occupies Tyr4–Asn119. Residues Cys13, Cys48, Cys82, Cys157, Cys161, and Cys164 each contribute to the [4Fe-4S] cluster site. A Radical SAM core domain is found at Thr143–Glu373. The 66-residue stretch at Lys376–Asn441 folds into the TRAM domain.

The protein belongs to the methylthiotransferase family. RimO subfamily. The cofactor is [4Fe-4S] cluster.

It localises to the cytoplasm. The enzyme catalyses L-aspartate(89)-[ribosomal protein uS12]-hydrogen + (sulfur carrier)-SH + AH2 + 2 S-adenosyl-L-methionine = 3-methylsulfanyl-L-aspartate(89)-[ribosomal protein uS12]-hydrogen + (sulfur carrier)-H + 5'-deoxyadenosine + L-methionine + A + S-adenosyl-L-homocysteine + 2 H(+). Functionally, catalyzes the methylthiolation of an aspartic acid residue of ribosomal protein uS12. The chain is Ribosomal protein uS12 methylthiotransferase RimO from Clostridium perfringens (strain 13 / Type A).